Here is a 783-residue protein sequence, read N- to C-terminus: Probable phosphoketolase (783 aa).

This sequence belongs to the XFP family. The cofactor is thiamine diphosphate.

The polypeptide is Probable phosphoketolase (Rhodopseudomonas palustris (strain ATCC BAA-98 / CGA009)).